A 90-amino-acid polypeptide reads, in one-letter code: ATP synthase subunit c (90 aa).

Helical transmembrane passes span 4 to 24 (FVYS…GCGI) and 53 to 73 (IGLA…LILI).

Belongs to the ATPase C chain family. In terms of assembly, F-type ATPases have 2 components, F(1) - the catalytic core - and F(0) - the membrane proton channel. F(1) has five subunits: alpha(3), beta(3), gamma(1), delta(1), epsilon(1). F(0) has three main subunits: a(1), b(2) and c(10-14). The alpha and beta chains form an alternating ring which encloses part of the gamma chain. F(1) is attached to F(0) by a central stalk formed by the gamma and epsilon chains, while a peripheral stalk is formed by the delta and b chains.

The protein resides in the cell inner membrane. Functionally, f(1)F(0) ATP synthase produces ATP from ADP in the presence of a proton or sodium gradient. F-type ATPases consist of two structural domains, F(1) containing the extramembraneous catalytic core and F(0) containing the membrane proton channel, linked together by a central stalk and a peripheral stalk. During catalysis, ATP synthesis in the catalytic domain of F(1) is coupled via a rotary mechanism of the central stalk subunits to proton translocation. Its function is as follows. Key component of the F(0) channel; it plays a direct role in translocation across the membrane. A homomeric c-ring of between 10-14 subunits forms the central stalk rotor element with the F(1) delta and epsilon subunits. The sequence is that of ATP synthase subunit c from Syntrophobacter fumaroxidans (strain DSM 10017 / MPOB).